A 341-amino-acid chain; its full sequence is Holliday junction branch migration complex subunit RuvB (341 aa).

The segment at 4–185 (TDRLIVPTAV…FGIVARLEFY (182 aa)) is large ATPase domain (RuvB-L). ATP contacts are provided by residues leucine 24, arginine 25, glycine 66, lysine 69, threonine 70, threonine 71, 132-134 (EDF), arginine 175, tyrosine 185, and arginine 222. Threonine 70 provides a ligand contact to Mg(2+). The small ATPAse domain (RuvB-S) stretch occupies residues 186-256 (SAEELGYIVH…VADAALVMLD (71 aa)). The head domain (RuvB-H) stretch occupies residues 259 to 341 (RAGLDVMDRK…ATPASDAELF (83 aa)). Residues arginine 295, arginine 314, and arginine 319 each contribute to the DNA site.

It belongs to the RuvB family. In terms of assembly, homohexamer. Forms an RuvA(8)-RuvB(12)-Holliday junction (HJ) complex. HJ DNA is sandwiched between 2 RuvA tetramers; dsDNA enters through RuvA and exits via RuvB. An RuvB hexamer assembles on each DNA strand where it exits the tetramer. Each RuvB hexamer is contacted by two RuvA subunits (via domain III) on 2 adjacent RuvB subunits; this complex drives branch migration. In the full resolvosome a probable DNA-RuvA(4)-RuvB(12)-RuvC(2) complex forms which resolves the HJ.

Its subcellular location is the cytoplasm. The enzyme catalyses ATP + H2O = ADP + phosphate + H(+). In terms of biological role, the RuvA-RuvB-RuvC complex processes Holliday junction (HJ) DNA during genetic recombination and DNA repair, while the RuvA-RuvB complex plays an important role in the rescue of blocked DNA replication forks via replication fork reversal (RFR). RuvA specifically binds to HJ cruciform DNA, conferring on it an open structure. The RuvB hexamer acts as an ATP-dependent pump, pulling dsDNA into and through the RuvAB complex. RuvB forms 2 homohexamers on either side of HJ DNA bound by 1 or 2 RuvA tetramers; 4 subunits per hexamer contact DNA at a time. Coordinated motions by a converter formed by DNA-disengaged RuvB subunits stimulates ATP hydrolysis and nucleotide exchange. Immobilization of the converter enables RuvB to convert the ATP-contained energy into a lever motion, pulling 2 nucleotides of DNA out of the RuvA tetramer per ATP hydrolyzed, thus driving DNA branch migration. The RuvB motors rotate together with the DNA substrate, which together with the progressing nucleotide cycle form the mechanistic basis for DNA recombination by continuous HJ branch migration. Branch migration allows RuvC to scan DNA until it finds its consensus sequence, where it cleaves and resolves cruciform DNA. The polypeptide is Holliday junction branch migration complex subunit RuvB (Thiobacillus denitrificans (strain ATCC 25259 / T1)).